The sequence spans 411 residues: Kelch domain-containing protein 10 (411 aa).

6 Kelch repeats span residues 72–133, 135–186, 187–239, 240–288, 296–342, and 345–388; these read NLYV…LHGH, LLVF…IIHG, FLYV…HDGQ, RIYV…RRCH, EVFI…AVTP, and CMYI…YFPQ.

Belongs to the KLHDC10 family. As to quaternary structure, component of a CRL2 E3 ubiquitin-protein ligase complex, also named ECS (Elongin BC-CUL2/5-SOCS-box protein) complex, composed of CUL2, Elongin BC (ELOB and ELOC), RBX1 and substrate-specific adapter KLHDC10.

It functions in the pathway protein modification; protein ubiquitination. Its function is as follows. Substrate-recognition component of a Cul2-RING (CRL2) E3 ubiquitin-protein ligase complex of the DesCEND (destruction via C-end degrons) pathway, which recognizes a C-degron located at the extreme C terminus of target proteins, leading to their ubiquitination and degradation. The C-degron recognized by the DesCEND pathway is usually a motif of less than ten residues and can be present in full-length proteins, truncated proteins or proteolytically cleaved forms. The CRL2(KLHDC10) complex specifically recognizes proteins with a proline-glycine (Pro-Gly) or an alanine tail (CAT tail) at the C-terminus, leading to their ubiquitination and degradation. The CRL2(KLHDC10) complex is involved in the ribosome-associated quality control (RQC) pathway, which mediates the extraction of incompletely synthesized nascent chains from stalled ribosomes: CRL2(KLHDC10) acts downstream of NEMF and recognizes CAT tails associated with stalled nascent chains, leading to their ubiquitination and degradation. The chain is Kelch domain-containing protein 10 from Xenopus laevis (African clawed frog).